A 55-amino-acid chain; its full sequence is Large ribosomal subunit protein bL32 (55 aa).

The span at Met-1–Gln-19 shows a compositional bias: basic residues. The segment at Met-1–Ala-22 is disordered.

The protein belongs to the bacterial ribosomal protein bL32 family.

The chain is Large ribosomal subunit protein bL32 from Corynebacterium urealyticum (strain ATCC 43042 / DSM 7109).